The sequence spans 164 residues: MKCKPNQTRTYDPEGFKKRAACLCFRSEREDEVLLVSSSRYPDRWIVPGGGMEPEEEPGGAAVREVYEEAGVKGKLGRLLGVFEQNQDRKHRTYVYVLTVTELLEDWEDSVSIGRKREWFKVEDAIKVLQCHKPVHAEYLEKLKLGGSPTNGNSMAPSSPDSDP.

Residues R9, 17–19 (KKR), and 38–40 (SSR) contribute to the substrate site. Residues 17–144 (KKRAACLCFR…VHAEYLEKLK (128 aa)) form the Nudix hydrolase domain. Positions 49 and 65 each coordinate Mg(2+). The Nudix box motif lies at 50 to 71 (GGMEPEEEPGGAAVREVYEEAG). E68 functions as the Proton acceptor in the catalytic mechanism. Position 69 (E69) interacts with Mg(2+). Residues 89–91 (RKH), R115, and K133 contribute to the substrate site. The interval 144–164 (KLGGSPTNGNSMAPSSPDSDP) is disordered. Polar residues predominate over residues 148 to 164 (SPTNGNSMAPSSPDSDP).

It belongs to the Nudix hydrolase family. DIPP subfamily. Requires Mg(2+) as cofactor. It depends on Mn(2+) as a cofactor. In terms of tissue distribution, mainly expressed in testis and, at lower level in brain. According to PubMed:12121577, it is also expressed in pancreas and weakly expressed in thymus, prostate, ovary, lung, small intestine and heart.

The protein resides in the cytoplasm. The enzyme catalyses diphospho-myo-inositol polyphosphate + H2O = myo-inositol polyphosphate + phosphate.. It carries out the reaction P(1),P(6)-bis(5'-adenosyl) hexaphosphate + H2O = adenosine 5'-pentaphosphate + AMP + 2 H(+). The catalysed reaction is P(1),P(5)-bis(5'-adenosyl) pentaphosphate + H2O = adenosine 5'-tetraphosphate + AMP + 2 H(+). In terms of biological role, cleaves a beta-phosphate from the diphosphate groups in PP-InsP5 (diphosphoinositol pentakisphosphate), suggesting that it may play a role in signal transduction. Also able to catalyze the hydrolysis of dinucleoside oligophosphates, with Ap6A and Ap5A being the preferred substrates. The major reaction products are ADP and p4a from Ap6A and ADP and ATP from Ap5A. Also able to hydrolyze 5-phosphoribose 1-diphosphate. In Homo sapiens (Human), this protein is Diphosphoinositol polyphosphate phosphohydrolase 3-beta.